The sequence spans 832 residues: Mechanosensitive cation channel TMEM63B (832 aa).

Topologically, residues 1-40 (MLPFLLATLGTTALNNSNPKDYCYSARIRSTVLQGLPFGG) are extracellular. The chain crosses the membrane as a helical span at residues 41-65 (VPTVLALDFMCFLALLFLFSILRKV). Cys51 carries S-palmitoyl cysteine lipidation. The Cytoplasmic segment spans residues 66–145 (AWDYGRLALV…KDDEIRDKCG (80 aa)). The Mediates endoplasmic reticulum retention motif lies at 86–88 (RDR). Phosphoserine is present on residues Ser111, Ser113, Ser114, and Ser115. Cys126 is lipidated: S-palmitoyl cysteine. Residues 146 to 178 (GDAVHYLSFQRHIIGLLVVVGVLSVGIVLPVNF) traverse the membrane as a helical segment. The Extracellular portion of the chain corresponds to 179 to 202 (SGDLLENNAYSFGRTTIANLKSGN). Residues 203-227 (NLLWLHTSFAFLYLLLTVYSMRRHT) traverse the membrane as a helical segment. At 228 to 427 (SKMRYKEDDL…IYWEHLSIRG (200 aa)) the chain is on the cytoplasmic side. Residues 231–426 (RYKEDDLVKR…NIYWEHLSIR (196 aa)) are intracellular linker IL2; confers mechanosensitivity. 2 S-palmitoyl cysteine lipidation sites follow: Cys382 and Cys398. The helical transmembrane segment at 428 to 457 (FIWWLRCLVINVVLFILLFFLTTPAIIITT) threads the bilayer. Over 458-472 (MDKFNVTKPVEYLNN) the chain is Extracellular. N-linked (GlcNAc...) asparagine glycosylation occurs at Asn462. The chain crosses the membrane as a helical span at residues 473–502 (PIITQFFPTLLLWCFSALLPTIVYYSAFFE). The Cytoplasmic portion of the chain corresponds to 503–506 (AHWT). Residues 507–543 (RSGENRTTMHKCYTFLIFMVLLLPSLGLSSLDLFFRW) traverse the membrane as a helical segment. Topologically, residues 544-566 (LFDKKFLAEAAIRFECVFLPDNG) are extracellular. A helical transmembrane segment spans residues 567-599 (AFFVNYVIASAFIGNAMDLLRIPGLLMYMIRLC). Positions 567–599 (AFFVNYVIASAFIGNAMDLLRIPGLLMYMIRLC) are gating helix. Residues 600 to 619 (LARSAAERRNVKRHQAYEFQ) are Cytoplasmic-facing. Residues 620 to 638 (FGAAYAWMMCVFTVVMTYS) form a helical membrane-spanning segment. Over 639–641 (ITC) the chain is Extracellular. Residues 642–666 (PIIVPFGLMYMLLKHLVDRYNLYYA) traverse the membrane as a helical segment. Residues 667 to 673 (YLPAKLD) are Cytoplasmic-facing. A helical transmembrane segment spans residues 674 to 702 (KKIHSGAVNQVVAAPILCLFWLLFFSTMR). Residues 703–707 (TGFLA) are Extracellular-facing. Residues 708 to 728 (PTSMFTFVVLVITIVICLCHV) traverse the membrane as a helical segment. Residues Cys726 and Cys729 are each lipidated (S-palmitoyl cysteine). Topologically, residues 729 to 832 (CFGHFKYLSA…DSLIENEIHQ (104 aa)) are cytoplasmic. The segment at 780-814 (EVDGDGDGAPGSSGDEPPSSSSQDEELLMPPDALT) is disordered. The span at 789–801 (PGSSGDEPPSSSS) shows a compositional bias: low complexity.

It belongs to the CSC1 (TC 1.A.17) family. In terms of assembly, monomer. Interacts with SLC19A2; interaction is required for the phospholipid scramblase activity. Post-translationally, palmitoylation is required for localization to the plasma membrane and stability. In terms of processing, N-Glycosylated.

Its subcellular location is the cell membrane. It localises to the endoplasmic reticulum membrane. The protein localises to the lysosome membrane. It is found in the early endosome membrane. It catalyses the reaction Ca(2+)(in) = Ca(2+)(out). It carries out the reaction Mg(2+)(in) = Mg(2+)(out). The catalysed reaction is K(+)(in) = K(+)(out). The enzyme catalyses Na(+)(in) = Na(+)(out). It catalyses the reaction Cs(+)(in) = Cs(+)(out). It carries out the reaction a 1,2-diacyl-sn-glycero-3-phosphocholine(in) = a 1,2-diacyl-sn-glycero-3-phosphocholine(out). The catalysed reaction is a sphingomyelin(in) = a sphingomyelin(out). Its function is as follows. Mechanosensitive cation channel with low conductance and high activation threshold. Osmosensitive cation channel preferentially activated by hypotonic stress. Also acts as a phospholipid scramblase in response to changes in membrane structure: upon changes in membrane curvature and thickness, alters its conformation and translocates phospholipids, such as phosphatidylcholine and sphingomyelin, thereby controlling plasma membrane lipid distribution. Forms a heterodimer with SLC19A2, which mediates phospholipid scramblase activity following Ca(2+) stimulation. Expressed in excitatory neurons of the subfornical organ and functions as a thirst receptor that mediates neuronal response to hyperosmolality to drive thirst and drinking behavior. Facilitates intestinal motility by promoting proliferation of intestinal stem cells. Essential for the baby's first breath and respiration throughout life. Upon lung inflation conducts cation currents in alveolar type 1 and 2 cells triggering lamellar body exocytosis and surfactant secretion into airspace. Acts as an osmosensor in cochlear outer hair cells (OHCs) where it mediates calcium influx and regulatory volume decrease response. Required for the maintenance of OHC morphology, OHC survival and normal hearing. This is Mechanosensitive cation channel TMEM63B from Homo sapiens (Human).